Reading from the N-terminus, the 405-residue chain is Beta-citrylglutamate synthase B (405 aa).

The 186-residue stretch at 115-300 (FQELAGHGVP…VAGIVADFVL (186 aa)) folds into the ATP-grasp domain. ATP is bound by residues Lys154, 189–199 (QEYVKESHGRD), and Arg215. Asp260, Glu273, and Asn275 together coordinate Mg(2+). The Mn(2+) site is built by Asp260, Glu273, and Asn275. The disordered stretch occupies residues 359 to 387 (AMSTMSTSSTSSESEADLTETGPTPVGAN). Residues 360-371 (MSTMSTSSTSSE) are compositionally biased toward low complexity.

Belongs to the RimK family. Mg(2+) serves as cofactor. Requires Mn(2+) as cofactor.

Its subcellular location is the cytoplasm. The catalysed reaction is citrate + L-glutamate + ATP = beta-citrylglutamate + ADP + phosphate + H(+). It catalyses the reaction N-acetyl-L-aspartate + L-glutamate + ATP = N-acetyl-L-aspartyl-L-glutamate + ADP + phosphate + H(+). In terms of biological role, catalyzes the synthesis of beta-citryl-L-glutamate and N-acetyl-L-aspartyl-L-glutamate. Beta-citryl-L-glutamate is synthesized more efficiently than N-acetyl-L-aspartyl-L-glutamate. The polypeptide is Beta-citrylglutamate synthase B (rimklb) (Danio rerio (Zebrafish)).